A 118-amino-acid polypeptide reads, in one-letter code: MHEITLCQRALELIEQQASAYGAKRVTAVWIKIGAFSCVETSALSFCFDLVCRGTIAEGCKLHLEEQEAECWCEHCQQYVTLLTHRVRRCPQCHSDTLRIVADDGLQIRRIEIDETED.

Histidine 2 is a binding site for Ni(2+). Residues cysteine 73, cysteine 76, cysteine 90, and cysteine 93 each coordinate Zn(2+).

This sequence belongs to the HypA/HybF family.

Involved in the maturation of [NiFe] hydrogenases. Required for nickel insertion into the metal center of the hydrogenase. The sequence is that of Hydrogenase maturation factor HypA from Salmonella typhi.